We begin with the raw amino-acid sequence, 273 residues long: HTH-type transcriptional activator RhaS (273 aa).

Residues 174-272 (YQLLDWLQNN…SQSPRDLRSQ (99 aa)) enclose the HTH araC/xylS-type domain. 2 consecutive DNA-binding regions (H-T-H motif) follow at residues 191 to 212 (PELADRFALPLRTLHRQLKNKT) and 239 to 262 (VTDIAYLCGFGDSNHFSTLFKREF).

In terms of assembly, binds DNA as a dimer.

It is found in the cytoplasm. Functionally, activates expression of the rhaBAD and rhaT operons. This chain is HTH-type transcriptional activator RhaS, found in Yersinia pseudotuberculosis serotype O:1b (strain IP 31758).